The sequence spans 164 residues: ATP synthase subunit b 2 (164 aa).

Residues 4–24 (TFWAFVGLVLFLALLAYFKVP) form a helical membrane-spanning segment.

The protein belongs to the ATPase B chain family. In terms of assembly, F-type ATPases have 2 components, F(1) - the catalytic core - and F(0) - the membrane proton channel. F(1) has five subunits: alpha(3), beta(3), gamma(1), delta(1), epsilon(1). F(0) has three main subunits: a(1), b(2) and c(10-14). The alpha and beta chains form an alternating ring which encloses part of the gamma chain. F(1) is attached to F(0) by a central stalk formed by the gamma and epsilon chains, while a peripheral stalk is formed by the delta and b chains.

The protein resides in the cell inner membrane. F(1)F(0) ATP synthase produces ATP from ADP in the presence of a proton or sodium gradient. F-type ATPases consist of two structural domains, F(1) containing the extramembraneous catalytic core and F(0) containing the membrane proton channel, linked together by a central stalk and a peripheral stalk. During catalysis, ATP synthesis in the catalytic domain of F(1) is coupled via a rotary mechanism of the central stalk subunits to proton translocation. Functionally, component of the F(0) channel, it forms part of the peripheral stalk, linking F(1) to F(0). The polypeptide is ATP synthase subunit b 2 (Bartonella quintana (strain Toulouse) (Rochalimaea quintana)).